Consider the following 316-residue polypeptide: 4-hydroxy-3-methylbut-2-enyl diphosphate reductase (316 aa).

Cys-12 serves as a coordination point for [4Fe-4S] cluster. (2E)-4-hydroxy-3-methylbut-2-enyl diphosphate-binding residues include His-43 and His-81. 2 residues coordinate dimethylallyl diphosphate: His-43 and His-81. Residues His-43 and His-81 each contribute to the isopentenyl diphosphate site. Residue Cys-103 participates in [4Fe-4S] cluster binding. His-131 contacts (2E)-4-hydroxy-3-methylbut-2-enyl diphosphate. Residue His-131 coordinates dimethylallyl diphosphate. His-131 contributes to the isopentenyl diphosphate binding site. Glu-133 functions as the Proton donor in the catalytic mechanism. Thr-170 is a (2E)-4-hydroxy-3-methylbut-2-enyl diphosphate binding site. Cys-198 is a binding site for [4Fe-4S] cluster. (2E)-4-hydroxy-3-methylbut-2-enyl diphosphate contacts are provided by Ser-226, Asn-228, and Ser-271. Dimethylallyl diphosphate is bound by residues Ser-226, Asn-228, and Ser-271. Isopentenyl diphosphate-binding residues include Ser-226, Asn-228, and Ser-271.

Belongs to the IspH family. The cofactor is [4Fe-4S] cluster.

It catalyses the reaction isopentenyl diphosphate + 2 oxidized [2Fe-2S]-[ferredoxin] + H2O = (2E)-4-hydroxy-3-methylbut-2-enyl diphosphate + 2 reduced [2Fe-2S]-[ferredoxin] + 2 H(+). The enzyme catalyses dimethylallyl diphosphate + 2 oxidized [2Fe-2S]-[ferredoxin] + H2O = (2E)-4-hydroxy-3-methylbut-2-enyl diphosphate + 2 reduced [2Fe-2S]-[ferredoxin] + 2 H(+). It functions in the pathway isoprenoid biosynthesis; dimethylallyl diphosphate biosynthesis; dimethylallyl diphosphate from (2E)-4-hydroxy-3-methylbutenyl diphosphate: step 1/1. The protein operates within isoprenoid biosynthesis; isopentenyl diphosphate biosynthesis via DXP pathway; isopentenyl diphosphate from 1-deoxy-D-xylulose 5-phosphate: step 6/6. Its function is as follows. Catalyzes the conversion of 1-hydroxy-2-methyl-2-(E)-butenyl 4-diphosphate (HMBPP) into a mixture of isopentenyl diphosphate (IPP) and dimethylallyl diphosphate (DMAPP). Acts in the terminal step of the DOXP/MEP pathway for isoprenoid precursor biosynthesis. The polypeptide is 4-hydroxy-3-methylbut-2-enyl diphosphate reductase (Bacillus mycoides (strain KBAB4) (Bacillus weihenstephanensis)).